The sequence spans 135 residues: Ribonuclease P protein component (135 aa).

It belongs to the RnpA family. In terms of assembly, consists of a catalytic RNA component (M1 or rnpB) and a protein subunit.

The catalysed reaction is Endonucleolytic cleavage of RNA, removing 5'-extranucleotides from tRNA precursor.. RNaseP catalyzes the removal of the 5'-leader sequence from pre-tRNA to produce the mature 5'-terminus. It can also cleave other RNA substrates such as 4.5S RNA. The protein component plays an auxiliary but essential role in vivo by binding to the 5'-leader sequence and broadening the substrate specificity of the ribozyme. The chain is Ribonuclease P protein component from Xylella fastidiosa (strain 9a5c).